Consider the following 181-residue polypeptide: Shikimate kinase (181 aa).

17–22 lines the ATP pocket; that stretch reads GAGKTT. Mg(2+) is bound at residue T21. The substrate site is built by D39, R63, and G85. R122 is a binding site for ATP. R141 provides a ligand contact to substrate.

Belongs to the shikimate kinase family. Monomer. Requires Mg(2+) as cofactor.

It is found in the cytoplasm. It catalyses the reaction shikimate + ATP = 3-phosphoshikimate + ADP + H(+). Its pathway is metabolic intermediate biosynthesis; chorismate biosynthesis; chorismate from D-erythrose 4-phosphate and phosphoenolpyruvate: step 5/7. In terms of biological role, catalyzes the specific phosphorylation of the 3-hydroxyl group of shikimic acid using ATP as a cosubstrate. The chain is Shikimate kinase from Trichormus variabilis (strain ATCC 29413 / PCC 7937) (Anabaena variabilis).